We begin with the raw amino-acid sequence, 1097 residues long: DNA-directed RNA polymerase subunit beta (1097 aa).

The segment at 1073 to 1097 (DINPRRNTPSRPTYESLGTSEYEED) is disordered. Residues 1077 to 1091 (RRNTPSRPTYESLGT) show a composition bias toward polar residues.

It belongs to the RNA polymerase beta chain family. In cyanobacteria the RNAP catalytic core is composed of 2 alpha, 1 beta, 1 beta', 1 gamma and 1 omega subunit. When a sigma factor is associated with the core the holoenzyme is formed, which can initiate transcription.

The enzyme catalyses RNA(n) + a ribonucleoside 5'-triphosphate = RNA(n+1) + diphosphate. Functionally, DNA-dependent RNA polymerase catalyzes the transcription of DNA into RNA using the four ribonucleoside triphosphates as substrates. In Prochlorococcus marinus (strain MIT 9312), this protein is DNA-directed RNA polymerase subunit beta.